Reading from the N-terminus, the 319-residue chain is Cobalamin biosynthesis protein CobD (319 aa).

Helical transmembrane passes span glycine 56 to methionine 76, valine 153 to alanine 173, leucine 204 to isoleucine 224, and isoleucine 290 to leucine 310.

It belongs to the CobD/CbiB family.

Its subcellular location is the cell membrane. It participates in cofactor biosynthesis; adenosylcobalamin biosynthesis. Converts cobyric acid to cobinamide by the addition of aminopropanol on the F carboxylic group. The polypeptide is Cobalamin biosynthesis protein CobD (Photorhabdus laumondii subsp. laumondii (strain DSM 15139 / CIP 105565 / TT01) (Photorhabdus luminescens subsp. laumondii)).